A 2031-amino-acid polypeptide reads, in one-letter code: Pericentriolar material 1 protein (2031 aa).

Disordered stretches follow at residues 1 to 82 (MATG…HTFP) and 111 to 165 (DQRS…STRS). The segment at 1-484 (MATGGGPPDE…RSTEQRTLGS (484 aa)) is self-association. Residues 42 to 58 (RSAEKNKKKFVECDLRL) are compositionally biased toward basic and acidic residues. Residues 114–130 (SIGSDSQGRATAANNKR) show a composition bias toward polar residues. Over residues 149–162 (NKEKSKSPPKREAS) the composition is skewed to basic and acidic residues. Residues 302-394 (RQEAKEELKN…FHNQLHDSED (93 aa)) adopt a coiled-coil conformation. Residues 469-494 (SSVSPRRSTEQRTLGSAVSSALTSDN) are compositionally biased toward polar residues. The disordered stretch occupies residues 469–495 (SSVSPRRSTEQRTLGSAVSSALTSDNR). A coiled-coil region spans residues 523–549 (AEKLKKLKEVRKRLNELRELVHYYEQT). Disordered stretches follow at residues 550–590 (SDMM…NPQY) and 649–678 (KEED…NSVA). Acidic residues predominate over residues 562 to 580 (KDEDETEDSEYDSEQEDAE). Polar residues-rich tracts occupy residues 581–590 (PTTNIRNPQY) and 667–677 (SRASLSSQNSV). Positions 684–711 (VDFEQKFNRLVAAKQKLKQLQDLVAMYG) form a coiled coil. The disordered stretch occupies residues 712–752 (DDSESEPVAPERSFSGDQFPPEATTLKQQPNNTRPNVSKAQ). A compositionally biased stretch (polar residues) spans 736–750 (TLKQQPNNTRPNVSK). Residues 745–1271 (RPNVSKAQKD…PACFGAGLSA (527 aa)) are self-association and localization to centrosomes. Residues 757-805 (LKEQAREKFYESKLQQQQRELSQLQEERKKLIEIQEKIQTLRKACPDLQ) adopt a coiled-coil conformation. 2 stretches are compositionally biased toward polar residues: residues 806–823 (LSTS…NRQM) and 888–898 (QGNTETTSAAS). Disordered regions lie at residues 806–835 (LSTS…VNTN) and 882–1014 (AEHQ…VSMR). Positions 858-892 (SEIRKHQILREDLRQRRKQLETLMAEHQRRQGNTE) form a coiled coil. Over residues 930–945 (LEEEEEEEEVDDEECL) the composition is skewed to acidic residues. Polar residues-rich tracts occupy residues 960–981 (NTSC…FNGR) and 1004–1013 (KTRQQQNVSM). A coiled-coil region spans residues 1025-1049 (LSHVEEKEHWQEQIDQIKKQLDYST). Disordered regions lie at residues 1123–1146 (QHLQ…TSPN), 1219–1247 (KPFE…QGRR), 1318–1345 (SAQA…QKSK), and 1514–1533 (PVCQ…LSTS). Basic and acidic residues-rich tracts occupy residues 1127 to 1136 (GESHQREDRG) and 1221 to 1247 (FESH…QGRR). Residues 1331-1345 (KAKNKKRKVFHQKSK) show a composition bias toward basic residues. Residues 1524-1533 (GDNISSLSTS) show a composition bias toward polar residues. Residues 1550–1599 (HFDQALARMREYERMKSETENGLVADCCNNLNAAASSLEGTNDEARGRAQ) adopt a coiled-coil conformation. Disordered stretches follow at residues 1746–1802 (ADKE…DLDE), 1817–1870 (ALTN…EANI), 1922–1965 (NNVK…DEDD), and 2007–2031 (ENGA…IHPA). Basic and acidic residues predominate over residues 1771–1784 (KDETETAEENRNFD). The segment covering 1824–1835 (GEDENEDEENYE) has biased composition (acidic residues). Composition is skewed to polar residues over residues 1843-1852 (VQTSLETSSE) and 1922-1942 (NNVK…SDTE).

This sequence belongs to the PCM1 family. Self-associates. Interacts with cetn3.

The protein resides in the cytoplasm. The protein localises to the cytoskeleton. It localises to the microtubule organizing center. It is found in the centrosome. Its subcellular location is the cytoplasmic granule. The protein resides in the centriolar satellite. The protein localises to the cilium basal body. In terms of biological role, required to anchor microtubules to the centrosome. Required for centrosome assembly and function. Essential for the correct localization of several centrosomal proteins including cetn3 and pcnt. Probably involved in the biogenesis of cilia. This is Pericentriolar material 1 protein (pcm1) from Xenopus laevis (African clawed frog).